A 360-amino-acid polypeptide reads, in one-letter code: Peptide chain release factor 1 (360 aa).

Gln235 carries the post-translational modification N5-methylglutamine. Residues 285 to 311 form a disordered region; sequence KRQQAQASERRNLLGSGDRSDRHRTYN. The segment covering 292 to 308 has biased composition (basic and acidic residues); that stretch reads SERRNLLGSGDRSDRHR.

This sequence belongs to the prokaryotic/mitochondrial release factor family. Methylated by PrmC. Methylation increases the termination efficiency of RF1.

It is found in the cytoplasm. Peptide chain release factor 1 directs the termination of translation in response to the peptide chain termination codons UAG and UAA. This Hamiltonella defensa subsp. Acyrthosiphon pisum (strain 5AT) protein is Peptide chain release factor 1.